Here is a 196-residue protein sequence, read N- to C-terminus: Crossover junction endodeoxyribonuclease RuvC (196 aa).

Catalysis depends on residues Asp19, Glu80, and Asp153. The Mg(2+) site is built by Asp19, Glu80, and Asp153.

The protein belongs to the RuvC family. As to quaternary structure, homodimer which binds Holliday junction (HJ) DNA. The HJ becomes 2-fold symmetrical on binding to RuvC with unstacked arms; it has a different conformation from HJ DNA in complex with RuvA. In the full resolvosome a probable DNA-RuvA(4)-RuvB(12)-RuvC(2) complex forms which resolves the HJ. It depends on Mg(2+) as a cofactor.

Its subcellular location is the cytoplasm. It catalyses the reaction Endonucleolytic cleavage at a junction such as a reciprocal single-stranded crossover between two homologous DNA duplexes (Holliday junction).. The RuvA-RuvB-RuvC complex processes Holliday junction (HJ) DNA during genetic recombination and DNA repair. Endonuclease that resolves HJ intermediates. Cleaves cruciform DNA by making single-stranded nicks across the HJ at symmetrical positions within the homologous arms, yielding a 5'-phosphate and a 3'-hydroxyl group; requires a central core of homology in the junction. The consensus cleavage sequence is 5'-(A/T)TT(C/G)-3'. Cleavage occurs on the 3'-side of the TT dinucleotide at the point of strand exchange. HJ branch migration catalyzed by RuvA-RuvB allows RuvC to scan DNA until it finds its consensus sequence, where it cleaves and resolves the cruciform DNA. The protein is Crossover junction endodeoxyribonuclease RuvC of Cutibacterium acnes (strain DSM 16379 / KPA171202) (Propionibacterium acnes).